A 440-amino-acid polypeptide reads, in one-letter code: Tol-Pal system protein TolB (440 aa).

Positions 1 to 28 (MVMTRRIFFSWFIVICSLWLSSFSSVHA) are cleaved as a signal peptide. The tract at residues 417–440 (RNERQLPTPNDASDPAWSPLLNMQ) is disordered.

The protein belongs to the TolB family. In terms of assembly, the Tol-Pal system is composed of five core proteins: the inner membrane proteins TolA, TolQ and TolR, the periplasmic protein TolB and the outer membrane protein Pal. They form a network linking the inner and outer membranes and the peptidoglycan layer.

It is found in the periplasm. Part of the Tol-Pal system, which plays a role in outer membrane invagination during cell division and is important for maintaining outer membrane integrity. This is Tol-Pal system protein TolB from Bartonella quintana (strain Toulouse) (Rochalimaea quintana).